We begin with the raw amino-acid sequence, 306 residues long: UDP-3-O-acyl-N-acetylglucosamine deacetylase (306 aa).

Residues histidine 79, histidine 238, and aspartate 242 each coordinate Zn(2+). Histidine 265 (proton donor) is an active-site residue.

The protein belongs to the LpxC family. The cofactor is Zn(2+).

The enzyme catalyses a UDP-3-O-[(3R)-3-hydroxyacyl]-N-acetyl-alpha-D-glucosamine + H2O = a UDP-3-O-[(3R)-3-hydroxyacyl]-alpha-D-glucosamine + acetate. Its pathway is glycolipid biosynthesis; lipid IV(A) biosynthesis; lipid IV(A) from (3R)-3-hydroxytetradecanoyl-[acyl-carrier-protein] and UDP-N-acetyl-alpha-D-glucosamine: step 2/6. Its function is as follows. Catalyzes the hydrolysis of UDP-3-O-myristoyl-N-acetylglucosamine to form UDP-3-O-myristoylglucosamine and acetate, the committed step in lipid A biosynthesis. The sequence is that of UDP-3-O-acyl-N-acetylglucosamine deacetylase from Hamiltonella defensa subsp. Acyrthosiphon pisum (strain 5AT).